We begin with the raw amino-acid sequence, 114 residues long: T cell receptor beta variable 5-1 (114 aa).

The signal sequence occupies residues 1–21 (MGSRLLCWVLLCLLGAGPVKA). Residues 22–114 (GVTQTPRYLI…SALYLCASSL (93 aa)) form the Ig-like domain. C42 and C110 are oxidised to a cystine. The N-linked (GlcNAc...) asparagine glycan is linked to N96.

As to quaternary structure, alpha-beta TR is a heterodimer composed of an alpha and beta chain; disulfide-linked. The alpha-beta TR is associated with the transmembrane signaling CD3 coreceptor proteins to form the TR-CD3 (TcR or TCR). The assembly of alpha-beta TR heterodimers with CD3 occurs in the endoplasmic reticulum where a single alpha-beta TR heterodimer associates with one CD3D-CD3E heterodimer, one CD3G-CD3E heterodimer and one CD247 homodimer forming a stable octameric structure. CD3D-CD3E and CD3G-CD3E heterodimers preferentially associate with TR alpha and TR beta chains, respectively. The association of the CD247 homodimer is the last step of TcR assembly in the endoplasmic reticulum and is required for transport to the cell surface.

The protein resides in the cell membrane. In terms of biological role, v region of the variable domain of T cell receptor (TR) beta chain that participates in the antigen recognition. Alpha-beta T cell receptors are antigen specific receptors which are essential to the immune response and are present on the cell surface of T lymphocytes. Recognize peptide-major histocompatibility (MH) (pMH) complexes that are displayed by antigen presenting cells (APC), a prerequisite for efficient T cell adaptive immunity against pathogens. Binding of alpha-beta TR to pMH complex initiates TR-CD3 clustering on the cell surface and intracellular activation of LCK that phosphorylates the ITAM motifs of CD3G, CD3D, CD3E and CD247 enabling the recruitment of ZAP70. In turn ZAP70 phosphorylates LAT, which recruits numerous signaling molecules to form the LAT signalosome. The LAT signalosome propagates signal branching to three major signaling pathways, the calcium, the mitogen-activated protein kinase (MAPK) kinase and the nuclear factor NF-kappa-B (NF-kB) pathways, leading to the mobilization of transcription factors that are critical for gene expression and essential for T cell growth and differentiation. The T cell repertoire is generated in the thymus, by V-(D)-J rearrangement. This repertoire is then shaped by intrathymic selection events to generate a peripheral T cell pool of self-MH restricted, non-autoaggressive T cells. Post-thymic interaction of alpha-beta TR with the pMH complexes shapes TR structural and functional avidity. This chain is T cell receptor beta variable 5-1, found in Homo sapiens (Human).